The sequence spans 748 residues: Probable transcriptional regulator SLK1 (748 aa).

Disordered stretches follow at residues Gln67 to Asn93 and Gln138 to Gln163. Over residues Gln71–Gln81 the composition is skewed to low complexity. The tract at residues Pro204–Leu451 is dimerization. A Nuclear localization signal motif is present at residues Arg213–Arg227. Residues Asn572–Phe587 are compositionally biased toward polar residues. 2 disordered regions span residues Asn572–Pro653 and Glu667–Phe712. Positions Ser588–Gln606 are enriched in low complexity. Over residues Phe615–Pro653 the composition is skewed to polar residues. A compositionally biased stretch (low complexity) spans Glu667–Ser686. A compositionally biased stretch (polar residues) spans Asn687–Ile699.

It belongs to the adn1/SEU family. As to quaternary structure, forms corepressor complexes with LUH; LUH is the transcription repressor subunit and SLK1 the specific DNA-binding adapters. In terms of tissue distribution, expressed in young flower meristems, ovules and the carpel margin meristem.

It is found in the nucleus. Functionally, probable transcription regulator that functions in the development of the carpel margin meristem similarly to SEUSS (SEU). In association with SEU, supports organ development from meristematic regions by facilitating auxin response and thus organ initiation, and by sustaining meristematic potential through the maintenance of PHABULOSA expression. DNA-binding adapter subunit of the SEU-SLK1 transcriptional corepressor of abiotic stress (e.g. salt and osmotic stress) response genes. The protein is Probable transcriptional regulator SLK1 (SLK1) of Arabidopsis thaliana (Mouse-ear cress).